The chain runs to 48 residues: Large ribosomal subunit protein bL34 (48 aa).

It belongs to the bacterial ribosomal protein bL34 family.

The sequence is that of Large ribosomal subunit protein bL34 from Gloeothece citriformis (strain PCC 7424) (Cyanothece sp. (strain PCC 7424)).